Consider the following 378-residue polypeptide: Chaperone protein DnaJ (378 aa).

Residues 5-70 (DYYEVLSVGR…DKKAAYDQFG (66 aa)) enclose the J domain. The CR-type zinc finger occupies 133–211 (GLTKELRIPT…CHGEGRVEKS (79 aa)). Residues cysteine 146, cysteine 149, cysteine 163, cysteine 166, cysteine 185, cysteine 188, cysteine 199, and cysteine 202 each contribute to the Zn(2+) site. CXXCXGXG motif repeat units follow at residues 146-153 (CDTCDGSG), 163-170 (CGTCHGQG), 185-192 (CPTCHGRG), and 199-206 (CNSCHGEG).

It belongs to the DnaJ family. Homodimer. The cofactor is Zn(2+).

Its subcellular location is the cytoplasm. Functionally, participates actively in the response to hyperosmotic and heat shock by preventing the aggregation of stress-denatured proteins and by disaggregating proteins, also in an autonomous, DnaK-independent fashion. Unfolded proteins bind initially to DnaJ; upon interaction with the DnaJ-bound protein, DnaK hydrolyzes its bound ATP, resulting in the formation of a stable complex. GrpE releases ADP from DnaK; ATP binding to DnaK triggers the release of the substrate protein, thus completing the reaction cycle. Several rounds of ATP-dependent interactions between DnaJ, DnaK and GrpE are required for fully efficient folding. Also involved, together with DnaK and GrpE, in the DNA replication of plasmids through activation of initiation proteins. The sequence is that of Chaperone protein DnaJ from Shewanella woodyi (strain ATCC 51908 / MS32).